Here is a 145-residue protein sequence, read N- to C-terminus: Large ribosomal subunit protein uL11 (145 aa).

This sequence belongs to the universal ribosomal protein uL11 family. In terms of assembly, part of the ribosomal stalk of the 50S ribosomal subunit. Interacts with L10 and the large rRNA to form the base of the stalk. L10 forms an elongated spine to which L12 dimers bind in a sequential fashion forming a multimeric L10(L12)X complex. Post-translationally, one or more lysine residues are methylated.

Functionally, forms part of the ribosomal stalk which helps the ribosome interact with GTP-bound translation factors. The chain is Large ribosomal subunit protein uL11 from Hydrogenobaculum sp. (strain Y04AAS1).